A 1252-amino-acid polypeptide reads, in one-letter code: DNA-directed RNA polymerase subunit beta (1252 aa).

The protein belongs to the RNA polymerase beta chain family. The RNAP catalytic core consists of 2 alpha, 1 beta, 1 beta' and 1 omega subunit. When a sigma factor is associated with the core the holoenzyme is formed, which can initiate transcription.

The catalysed reaction is RNA(n) + a ribonucleoside 5'-triphosphate = RNA(n+1) + diphosphate. Functionally, DNA-dependent RNA polymerase catalyzes the transcription of DNA into RNA using the four ribonucleoside triphosphates as substrates. This Chlamydia caviae (strain ATCC VR-813 / DSM 19441 / 03DC25 / GPIC) (Chlamydophila caviae) protein is DNA-directed RNA polymerase subunit beta.